The chain runs to 326 residues: Protein phosphatase PTC7 homolog fig (326 aa).

Residues 40–83 form a disordered region; it reads VQGKSKPRSPHLTSPQCSPEHRPRRFRPPSASGRTAFSSAPRPK. In terms of domain architecture, PPM-type phosphatase spans 64–314; sequence RFRPPSASGR…DDITVVLASV (251 aa). Asp91, Gly92, and Asp236 together coordinate Mn(2+).

The protein belongs to the PP2C family. The cofactor is Mg(2+). Mn(2+) serves as cofactor.

The catalysed reaction is O-phospho-L-seryl-[protein] + H2O = L-seryl-[protein] + phosphate. It catalyses the reaction O-phospho-L-threonyl-[protein] + H2O = L-threonyl-[protein] + phosphate. This Drosophila persimilis (Fruit fly) protein is Protein phosphatase PTC7 homolog fig.